An 857-amino-acid chain; its full sequence is Putative serine/threonine-protein kinase receptor (857 aa).

The signal sequence occupies residues 1-32; it reads MKGARNIYHHSYMSFLLVFVVMILIHPALSIY. The Extracellular portion of the chain corresponds to 33-446; it reads INTLSSTESL…IAKKRNASGK (414 aa). The 121-residue stretch at 35–155 folds into the Bulb-type lectin domain; it reads TLSSTESLTI…SNNDASEYLW (121 aa). N-linked (GlcNAc...) asparagine glycosylation is found at Asn-47, Asn-120, Asn-196, Asn-260, Asn-389, and Asn-442. One can recognise a PAN domain in the interval 350 to 433; sequence CSGDGFTRMK…DGQDLYVRLA (84 aa). Cystine bridges form between Cys-380-Cys-405 and Cys-388-Cys-390. The helical transmembrane segment at 447 to 466 threads the bilayer; sequence IISLTVGVSVLLLLIMFCLW. The Cytoplasmic segment spans residues 467–857; that stretch reads KRKQKRAKAS…QYTCSVIDAR (391 aa). The Protein kinase domain maps to 528 to 779; the sequence is FSSCNKLGQG…PSIFQPQEVL (252 aa). ATP is bound by residues 534–542 and Lys-556; that span reads LGQGGFGIV. The active-site Proton acceptor is Asp-653.

The protein belongs to the protein kinase superfamily. Ser/Thr protein kinase family. In terms of tissue distribution, predominantly in the pistil and anther.

It localises to the membrane. It carries out the reaction L-seryl-[protein] + ATP = O-phospho-L-seryl-[protein] + ADP + H(+). It catalyses the reaction L-threonyl-[protein] + ATP = O-phospho-L-threonyl-[protein] + ADP + H(+). Functionally, involved in sporophytic self-incompatibility system (the inability of flowering plants to achieve self-fertilization), probably acting in combination with S-locus-specific glycoproteins. Interaction with a ligand in the extracellular domain triggers the protein kinase activity of the cytoplasmic domain. The protein is Putative serine/threonine-protein kinase receptor (SRK6) of Brassica oleracea var. viridis (Flowering kale).